Here is a 378-residue protein sequence, read N- to C-terminus: Chaperone protein DnaJ (378 aa).

In terms of domain architecture, J spans 5-70 (DYYEVLGVGR…NKKAAYDQFG (66 aa)). The CR-type zinc finger occupies 134–212 (GLTKELRIPT…CHGDGRVEKT (79 aa)). The Zn(2+) site is built by cysteine 147, cysteine 150, cysteine 164, cysteine 167, cysteine 186, cysteine 189, cysteine 200, and cysteine 203. CXXCXGXG motif repeat units follow at residues 147 to 154 (CDVCDGSG), 164 to 171 (CTTCHGQG), 186 to 193 (CPTCHGRG), and 200 to 207 (CAKCHGDG).

Belongs to the DnaJ family. As to quaternary structure, homodimer. Requires Zn(2+) as cofactor.

It is found in the cytoplasm. In terms of biological role, participates actively in the response to hyperosmotic and heat shock by preventing the aggregation of stress-denatured proteins and by disaggregating proteins, also in an autonomous, DnaK-independent fashion. Unfolded proteins bind initially to DnaJ; upon interaction with the DnaJ-bound protein, DnaK hydrolyzes its bound ATP, resulting in the formation of a stable complex. GrpE releases ADP from DnaK; ATP binding to DnaK triggers the release of the substrate protein, thus completing the reaction cycle. Several rounds of ATP-dependent interactions between DnaJ, DnaK and GrpE are required for fully efficient folding. Also involved, together with DnaK and GrpE, in the DNA replication of plasmids through activation of initiation proteins. The polypeptide is Chaperone protein DnaJ (Shewanella oneidensis (strain ATCC 700550 / JCM 31522 / CIP 106686 / LMG 19005 / NCIMB 14063 / MR-1)).